The sequence spans 394 residues: tRNA-specific adenosine deaminase 1 (394 aa).

The A to I editase domain maps to 54–388 (SLGCGTKCIG…TKKPHELLDF (335 aa)). His-78 lines the Zn(2+) pocket. Catalysis depends on Glu-80, which acts as the Proton donor. 1D-myo-inositol hexakisphosphate contacts are provided by Arg-84 and Arg-85. Zn(2+) contacts are provided by Cys-127 and Cys-191. The 1D-myo-inositol hexakisphosphate site is built by Lys-194, Arg-197, Lys-320, Lys-357, and Lys-381.

The protein belongs to the ADAT1 family. The cofactor is 1D-myo-inositol hexakisphosphate. As to expression, widely expressed in early embryos, and later concentrates in the central nervous system.

The enzyme catalyses adenosine(37) in tRNA(Ala) + H2O + H(+) = inosine(37) in tRNA(Ala) + NH4(+). Specifically deaminates adenosine-37 to inosine in tRNA-Ala. This is tRNA-specific adenosine deaminase 1 from Drosophila melanogaster (Fruit fly).